A 401-amino-acid chain; its full sequence is MVNGSTQYLAHVGELSLKKGNRRQFEVQLERNLTLMLRSINPHVTVRAGRLYLSVPASFEAQTTAEQALSCLLGITGWAAATACPKTMEAITRCAHAEATLAAREGKRTFRIEARRADKRFCRTSSEIAREVGAVIHQSGALSVDLHYPDVVIFIEVREREAFLYGARRRGLRGLPCGVSGRGLLLLSGGIDSPVAGYRMLSRGMHIDCLYFHSYPYTPPEAQKKVEDLAKVLARYGLSTTLTVVSLTDIQKQLQTHAPAPSLTLLLRMCMMRIAEHVAREQRARCLITGESLAQVASQTLENLTVTSACTHLPIFRPLIGADKEDIIRTATEIGTYAISIRPYEDCCTLFAPKHPVLRPEVEEMQKQYQSLMLGPLLEDAFRTRKRTRIYGNYGVQESGE.

The 106-residue stretch at 63–168 (TTAEQALSCL…EREAFLYGAR (106 aa)) folds into the THUMP domain. Residues 186-187 (LL), 211-212 (YF), R268, G290, and Q299 each bind ATP.

This sequence belongs to the ThiI family.

The protein localises to the cytoplasm. It catalyses the reaction [ThiI sulfur-carrier protein]-S-sulfanyl-L-cysteine + a uridine in tRNA + 2 reduced [2Fe-2S]-[ferredoxin] + ATP + H(+) = [ThiI sulfur-carrier protein]-L-cysteine + a 4-thiouridine in tRNA + 2 oxidized [2Fe-2S]-[ferredoxin] + AMP + diphosphate. The catalysed reaction is [ThiS sulfur-carrier protein]-C-terminal Gly-Gly-AMP + S-sulfanyl-L-cysteinyl-[cysteine desulfurase] + AH2 = [ThiS sulfur-carrier protein]-C-terminal-Gly-aminoethanethioate + L-cysteinyl-[cysteine desulfurase] + A + AMP + 2 H(+). Its pathway is cofactor biosynthesis; thiamine diphosphate biosynthesis. In terms of biological role, catalyzes the ATP-dependent transfer of a sulfur to tRNA to produce 4-thiouridine in position 8 of tRNAs, which functions as a near-UV photosensor. Also catalyzes the transfer of sulfur to the sulfur carrier protein ThiS, forming ThiS-thiocarboxylate. This is a step in the synthesis of thiazole, in the thiamine biosynthesis pathway. The sulfur is donated as persulfide by IscS. The protein is Probable tRNA sulfurtransferase of Treponema pallidum subsp. pallidum (strain SS14).